The sequence spans 500 residues: NAD(P)H-quinone oxidoreductase chain 4, chloroplastic (500 aa).

14 consecutive transmembrane segments (helical) span residues 4-24 (FPWL…IFFL), 37-57 (ICIC…HFQL), 87-107 (IGPI…AWPV), 113-130 (LFHF…GSFS), 134-154 (LLLF…LLSM), 167-187 (FILY…GIGL), 207-227 (IALE…KSPI), 242-262 (HYST…YGLV), 272-292 (AHSL…IYAA), 305-325 (IAYS…SITD), 330-350 (GAIL…FLAG), 386-406 (LALP…GIIT), 411-431 (FLMA…LTPI), and 462-482 (LFVS…PDFL).

Belongs to the complex I subunit 4 family.

The protein resides in the plastid. The protein localises to the chloroplast thylakoid membrane. The catalysed reaction is a plastoquinone + NADH + (n+1) H(+)(in) = a plastoquinol + NAD(+) + n H(+)(out). It catalyses the reaction a plastoquinone + NADPH + (n+1) H(+)(in) = a plastoquinol + NADP(+) + n H(+)(out). This chain is NAD(P)H-quinone oxidoreductase chain 4, chloroplastic, found in Carica papaya (Papaya).